The following is a 474-amino-acid chain: Gamma-aminobutyric acid receptor subunit beta-1 (474 aa).

The N-terminal stretch at Met1–Ala25 is a signal peptide. Over His26–Tyr245 the chain is Extracellular. Residues Asn33 and Asn105 are each glycosylated (N-linked (GlcNAc...) asparagine). Tyr122 contacts histamine. Cys161 and Cys175 form a disulfide bridge. N-linked (GlcNAc...) asparagine glycosylation is present at Asn174. Residues Ser181 to Tyr182 and Thr227 contribute to the histamine site. 2 residues coordinate 4-aminobutanoate: Tyr182 and Thr227. The next 3 helical transmembrane spans lie at Phe246–Ile267, Ala271–Leu293, and Ala305–Val327. At Asn328 to Lys451 the chain is on the cytoplasmic side. The helical transmembrane segment at Trp452–Val473 threads the bilayer.

The protein belongs to the ligand-gated ion channel (TC 1.A.9) family. Gamma-aminobutyric acid receptor (TC 1.A.9.5) subfamily. GABRB1 sub-subfamily. In terms of assembly, heteropentamer, formed by a combination of alpha (GABRA1-6), beta (GABRB1-3), gamma (GABRG1-3), delta (GABRD), epsilon (GABRE), rho (GABRR1-3), pi (GABRP) and theta (GABRQ) chains, each subunit exhibiting distinct physiological and pharmacological properties. Binds UBQLN1.

Its subcellular location is the postsynaptic cell membrane. The protein localises to the cell membrane. It carries out the reaction chloride(in) = chloride(out). Potentiated by histamine. Beta subunit of the heteropentameric ligand-gated chloride channel gated by gamma-aminobutyric acid (GABA), a major inhibitory neurotransmitter in the brain. GABA-gated chloride channels, also named GABA(A) receptors (GABAAR), consist of five subunits arranged around a central pore and contain GABA active binding site(s) located at the alpha and beta subunit interface(s). When activated by GABA, GABAARs selectively allow the flow of chloride anions across the cell membrane down their electrochemical gradient. Chloride influx into the postsynaptic neuron following GABAAR opening decreases the neuron ability to generate a new action potential, thereby reducing nerve transmission. Beta-containing GABAARs can simultaneously bind GABA and histamine where histamine binds at the interface of two neighboring beta subunits, which may be involved in the regulation of sleep and wakefulness. In Mus musculus (Mouse), this protein is Gamma-aminobutyric acid receptor subunit beta-1.